A 191-amino-acid polypeptide reads, in one-letter code: Molybdenum cofactor guanylyltransferase (191 aa).

GTP-binding positions include 11-13 (LCG), Lys23, Asp66, and Asp97. Mg(2+) is bound at residue Asp97.

The protein belongs to the MobA family. As to quaternary structure, monomer. It depends on Mg(2+) as a cofactor.

The protein localises to the cytoplasm. It carries out the reaction Mo-molybdopterin + GTP + H(+) = Mo-molybdopterin guanine dinucleotide + diphosphate. Functionally, transfers a GMP moiety from GTP to Mo-molybdopterin (Mo-MPT) cofactor (Moco or molybdenum cofactor) to form Mo-molybdopterin guanine dinucleotide (Mo-MGD) cofactor. The polypeptide is Molybdenum cofactor guanylyltransferase (Campylobacter jejuni subsp. doylei (strain ATCC BAA-1458 / RM4099 / 269.97)).